The primary structure comprises 345 residues: Phosphoribosylformylglycinamidine cyclo-ligase (345 aa).

The protein belongs to the AIR synthase family.

It is found in the cytoplasm. It carries out the reaction 2-formamido-N(1)-(5-O-phospho-beta-D-ribosyl)acetamidine + ATP = 5-amino-1-(5-phospho-beta-D-ribosyl)imidazole + ADP + phosphate + H(+). Its pathway is purine metabolism; IMP biosynthesis via de novo pathway; 5-amino-1-(5-phospho-D-ribosyl)imidazole from N(2)-formyl-N(1)-(5-phospho-D-ribosyl)glycinamide: step 2/2. The polypeptide is Phosphoribosylformylglycinamidine cyclo-ligase (Anaeromyxobacter dehalogenans (strain 2CP-1 / ATCC BAA-258)).